The chain runs to 1255 residues: Kinesin-related protein 7 (1255 aa).

Positions 1 to 26 (MESPVVEGNSGEVATPTLPQPPTPVS) are disordered. One can recognise a Kinesin motor domain in the interval 28-349 (NIRVVCRVRP…LQFGTRAKTI (322 aa)). ATP is bound at residue 107–114 (GQTASGKT). Low complexity-rich tracts occupy residues 454 to 491 (NNNN…QQEN), 545 to 563 (NNNN…DSDG), and 583 to 603 (HNIN…NSNS). Disordered stretches follow at residues 454–503 (NNNN…NSSF), 530–564 (GNIS…SDGY), 579–628 (DLND…MDVN), 661–686 (ENEQ…SNAT), 795–864 (EEGS…TKSI), and 915–934 (ISIK…TSIK). The segment covering 608 to 628 (VSTSYITSSPNLSPSKSMDVN) has biased composition (polar residues). Residues 813 to 834 (GDDDDEENEDNENEDVIVDSDE) show a composition bias toward acidic residues. Over residues 915-932 (ISIKSNKEPSPSSSTTTS) the composition is skewed to low complexity. The chain crosses the membrane as a helical span at residues 945–965 (IIFTIILTITLVSSSLLCLYL). Residues 1088 to 1223 (NYITKIDQLS…QELEDAPIAL (136 aa)) are a coiled coil.

It belongs to the TRAFAC class myosin-kinesin ATPase superfamily. Kinesin family.

The protein resides in the nucleus membrane. Its subcellular location is the cytoplasm. It localises to the cytoskeleton. Its function is as follows. Microtubule-associated force-producing protein that plays a role in organelle transport. Its motor activity is directed toward the microtubule's plus end. May be involved in cell motility or cell differentiation during prestalk formation. The protein is Kinesin-related protein 7 (kif7) of Dictyostelium discoideum (Social amoeba).